Consider the following 632-residue polypeptide: MRFRYKAFLLTLFASTTTLTGFIIPTLSQHGSSTDPSFVALRNNSSLSCDGKSRLLEFGNDLGFSKEETDVLAKQKNWEQNYTNFKKQFEHKLLDPKSFSLTDVYNLFSGFQQSVADTVKLMNELQTQVNKANDIYPVESFQVPKVPQKLFGFVDQGFFPKLNPKGLNIADNVASLFEKYSLKQATLKDFDIVLEKKNDIVLEHKVRYNFALQFHFETTYIGSGGEINLQFALQASTTNFSSLEELQASFSKVGNNLTAQLFWKPVVNKLTSGENDLTHIAQTAVGESLFDSRVDLTSSIINNEAAIKTTQQQFETEVLALFKAEREKALAEYKAEQERIAKELEEQRKELERLKKEQQNKQELVESLYNVANFVSYWEKRGKDVTDKKQLIQALKSAFATNWNEVFQLLTAGMREGIKEYYKHNKPDQSANAKKAFGQNGLAFPRTGFDGIYMSDWLRGELRNKGNINLHLKQNETTVKKIRDDISIEWNESKGGIEFHQTYPYWFEFEVNFKYIGGYSLNWWDAIWAKVAGIPGSWKGEMNLKLVIDGEIHKWMVTKPDYPRTFFQFDDQFDKLWFTLHVSQEISVRDESFMNLLKKQGLDKLDLRTGSTKPPVVDLASYLHYLILADKS.

Belongs to the MG032/MG096/MG288 family.

This is an uncharacterized protein from Mycoplasma pneumoniae (strain ATCC 29342 / M129 / Subtype 1) (Mycoplasmoides pneumoniae).